A 485-amino-acid chain; its full sequence is uncharacterized protein (485 aa).

13 helical membrane-spanning segments follow: residues 13-33 (WSAL…VILS), 38-58 (PFEF…DMLA), 79-99 (ALYW…IILS), 111-131 (LSFL…GQQY), 160-180 (VIIG…LLTV), 211-231 (LLFS…SSIT), 234-254 (IVAR…FNVA), 297-317 (INFP…YLVF), 321-341 (WLFI…RMVA), 365-385 (IIIF…VGAA), 388-408 (FLIC…KPVL), 420-440 (FIPF…DIYI), and 445-465 (LTFF…TIFI).

Belongs to the polysaccharide synthase family.

The protein resides in the cell membrane. This is an uncharacterized protein from Klebsiella pneumoniae.